The following is a 425-amino-acid chain: CinA-like protein (425 aa).

This sequence belongs to the CinA family.

This is CinA-like protein from Shewanella sp. (strain MR-4).